Consider the following 261-residue polypeptide: Carnitinyl-CoA dehydratase (261 aa).

The active-site Nucleophile is the Glu-111. Residue Glu-131 is the Proton acceptor of the active site.

The protein belongs to the enoyl-CoA hydratase/isomerase family.

It carries out the reaction (R)-carnitinyl-CoA = crotonobetainyl-CoA + H2O. The protein operates within amine and polyamine metabolism; carnitine metabolism. In terms of biological role, catalyzes the reversible dehydration of L-carnitinyl-CoA to crotonobetainyl-CoA. The polypeptide is Carnitinyl-CoA dehydratase (Salmonella typhimurium (strain LT2 / SGSC1412 / ATCC 700720)).